The primary structure comprises 263 residues: 4-hydroxy-tetrahydrodipicolinate reductase (263 aa).

Residues 7-12 (GFKGRM), 96-98 (GTT), and 122-125 (APNF) contribute to the NAD(+) site. His-152 acts as the Proton donor/acceptor in catalysis. His-153 is a (S)-2,3,4,5-tetrahydrodipicolinate binding site. Lys-156 functions as the Proton donor in the catalytic mechanism. A (S)-2,3,4,5-tetrahydrodipicolinate-binding site is contributed by 162-163 (GT).

It belongs to the DapB family.

The protein resides in the cytoplasm. It catalyses the reaction (S)-2,3,4,5-tetrahydrodipicolinate + NAD(+) + H2O = (2S,4S)-4-hydroxy-2,3,4,5-tetrahydrodipicolinate + NADH + H(+). The catalysed reaction is (S)-2,3,4,5-tetrahydrodipicolinate + NADP(+) + H2O = (2S,4S)-4-hydroxy-2,3,4,5-tetrahydrodipicolinate + NADPH + H(+). It participates in amino-acid biosynthesis; L-lysine biosynthesis via DAP pathway; (S)-tetrahydrodipicolinate from L-aspartate: step 4/4. In terms of biological role, catalyzes the conversion of 4-hydroxy-tetrahydrodipicolinate (HTPA) to tetrahydrodipicolinate. This Listeria welshimeri serovar 6b (strain ATCC 35897 / DSM 20650 / CCUG 15529 / CIP 8149 / NCTC 11857 / SLCC 5334 / V8) protein is 4-hydroxy-tetrahydrodipicolinate reductase.